We begin with the raw amino-acid sequence, 184 residues long: Photosystem I assembly protein Ycf4 (184 aa).

The next 2 helical transmembrane spans lie at 22-42 and 57-77; these read FCWA…GTSS and IVFF…LFIS.

This sequence belongs to the Ycf4 family.

Its subcellular location is the plastid. It is found in the chloroplast thylakoid membrane. In terms of biological role, seems to be required for the assembly of the photosystem I complex. This is Photosystem I assembly protein Ycf4 from Gossypium barbadense (Sea Island cotton).